Consider the following 679-residue polypeptide: Penicillin-binding protein 1A (679 aa).

The segment covering 1–14 (MTERKREHKDRKQN) has biased composition (basic residues). The tract at residues 1 to 20 (MTERKREHKDRKQNKNSPKN) is disordered. At 1-30 (MTERKREHKDRKQNKNSPKNQSKVTKFLKW) the chain is on the cytoplasmic side. Residues 31 to 51 (FFIGILLLGITAVTVVGIYVL) form a helical; Signal-anchor for type II membrane protein membrane-spanning segment. The Extracellular portion of the chain corresponds to 52–679 (SIIRSSPELD…QYKEVDNLVE (628 aa)). The tract at residues 72–244 (SILYDDQGNF…PTSYDGLSEA (173 aa)) is transglycosylase. Catalysis depends on Glu111, which acts as the Proton donor; for transglycosylase activity. Residues 378–663 (ASATIIDYKT…TSPIFGKIMG (286 aa)) are transpeptidase. The active-site Acyl-ester intermediate; for transpeptidase activity is Ser417.

This sequence in the N-terminal section; belongs to the glycosyltransferase 51 family. In the C-terminal section; belongs to the transpeptidase family.

The protein localises to the cell membrane. The catalysed reaction is [GlcNAc-(1-&gt;4)-Mur2Ac(oyl-L-Ala-gamma-D-Glu-L-Lys-D-Ala-D-Ala)](n)-di-trans,octa-cis-undecaprenyl diphosphate + beta-D-GlcNAc-(1-&gt;4)-Mur2Ac(oyl-L-Ala-gamma-D-Glu-L-Lys-D-Ala-D-Ala)-di-trans,octa-cis-undecaprenyl diphosphate = [GlcNAc-(1-&gt;4)-Mur2Ac(oyl-L-Ala-gamma-D-Glu-L-Lys-D-Ala-D-Ala)](n+1)-di-trans,octa-cis-undecaprenyl diphosphate + di-trans,octa-cis-undecaprenyl diphosphate + H(+). It catalyses the reaction Preferential cleavage: (Ac)2-L-Lys-D-Ala-|-D-Ala. Also transpeptidation of peptidyl-alanyl moieties that are N-acyl substituents of D-alanine.. It functions in the pathway cell wall biogenesis; peptidoglycan biosynthesis. Its function is as follows. Cell wall formation. Synthesis of cross-linked peptidoglycan from the lipid intermediates. The enzyme has a penicillin-insensitive transglycosylase N-terminal domain (formation of linear glycan strands) and a penicillin-sensitive transpeptidase C-terminal domain (cross-linking of the peptide subunits). The chain is Penicillin-binding protein 1A (pbpA) from Clostridium perfringens (strain 13 / Type A).